The following is a 128-amino-acid chain: Probable cystatin-15 (128 aa).

A signal peptide spans 1–20 (MFWKLPLLLGLLALGPHVCS). C82 and C92 are joined by a disulfide. N104 carries N-linked (GlcNAc...) asparagine glycosylation. Residues C105 and C125 are joined by a disulfide bond.

Belongs to the cystatin family.

It is found in the secreted. The sequence is that of Probable cystatin-15 from Bos taurus (Bovine).